The primary structure comprises 610 residues: ESX-5 secretion system protein EccA5 (610 aa).

Residue 357-364 (GPPGTGKT) participates in ATP binding.

It belongs to the CbxX/CfxQ family. In terms of assembly, part of the ESX-5 / type VII secretion system (T7SS), which is composed of cytosolic and membrane components.

It localises to the cytoplasm. Functionally, part of an ESX-5 / type VII specialized secretion system (T7SS), which exports several proteins. EccA5 exhibits ATPase activity and may provide energy for the export of ESX-5 substrates. The chain is ESX-5 secretion system protein EccA5 from Mycobacterium bovis (strain ATCC BAA-935 / AF2122/97).